Reading from the N-terminus, the 603-residue chain is Linalool synthase Tps-5031L19, chloroplastic (603 aa).

The transit peptide at 1-36 (MSSMRTYVAIMKKPSVEHVDNVDKKASKPSWRVSLS) directs the protein to the chloroplast. Residues Arg322, Asp359, Asp363, Arg500, and Asp503 each contribute to the (2E)-geranyl diphosphate site. Positions 359 and 363 each coordinate Mg(2+). A DDXXD motif motif is present at residues 359-363 (DDVYD). Residues Asp503, Thr507, and Glu511 each contribute to the Mg(2+) site.

The protein belongs to the terpene synthase family. Tpsb subfamily. Monomer. Mg(2+) is required as a cofactor. Mn(2+) serves as cofactor.

The protein localises to the plastid. It is found in the chloroplast. It catalyses the reaction (2E)-geranyl diphosphate + H2O = linalool + diphosphate. The protein operates within secondary metabolite biosynthesis; terpenoid biosynthesis. Functionally, monoterpene synthase (mono-TPS) involved in the biosynthesis of monoterpenes natural products. Catalyzes the conversion of (2E)-geranyl diphosphate (GPP) into linalool. The sequence is that of Linalool synthase Tps-5031L19, chloroplastic from Perilla frutescens var. hirtella (Perilla citriodora).